The following is a 1080-amino-acid chain: Serine/threonine-protein kinase KIC1 (1080 aa).

Positions 23-276 (FKRTEVIGRG…ADDLLKSKFI (254 aa)) constitute a Protein kinase domain. ATP is bound by residues 29-37 (IGRGKFGVV) and K52. The Proton acceptor role is filled by D144. 4 disordered regions span residues 308-347 (EGSIPENEPSKPSEAPKPSQNGGGDEAQKSIASNDNEIKR), 615-760 (KARS…LAPP), 787-831 (STLN…LQMP), and 901-956 (SQSI…NTGN). The span at 312-326 (PENEPSKPSEAPKPS) shows a compositional bias: low complexity. Over residues 615 to 626 (KARSSTVTAGTP) the composition is skewed to polar residues. Residues 627–638 (SSSSSIQYKSPS) show a composition bias toward low complexity. Positions 656–673 (STITNQKLGSAVASNSGI) are enriched in polar residues. Residues 674-689 (SSTPNNSNNYNNNTDS) show a composition bias toward low complexity. A compositionally biased stretch (polar residues) spans 693 to 726 (RGSSGSNTANSTQMGITNPGNVTKLSTHKASSPS). Phosphoserine is present on S735. Over residues 743-756 (SPTQNIGHNSTHTN) the composition is skewed to polar residues. A compositionally biased stretch (low complexity) spans 787-807 (STLNTISGNSSNNLTSSNYFS). Basic and acidic residues predominate over residues 808 to 821 (NEKEGSRVNGDFKR). The span at 901–913 (SQSISNRKNSSAS) shows a compositional bias: polar residues. A compositionally biased stretch (low complexity) spans 918-956 (NILGSSVSGNVSGIGNNNVGSNNNSGPNNSVPLSANTGN).

Belongs to the protein kinase superfamily. Ser/Thr protein kinase family. In terms of assembly, interacts with CDC31.

It carries out the reaction L-seryl-[protein] + ATP = O-phospho-L-seryl-[protein] + ADP + H(+). It catalyses the reaction L-threonyl-[protein] + ATP = O-phospho-L-threonyl-[protein] + ADP + H(+). Functionally, protein kinase involved in morphogenesis and cell integrity. This is Serine/threonine-protein kinase KIC1 (KIC1) from Saccharomyces cerevisiae (strain ATCC 204508 / S288c) (Baker's yeast).